Here is a 132-residue protein sequence, read N- to C-terminus: Small ribosomal subunit protein uS11 (132 aa).

This sequence belongs to the universal ribosomal protein uS11 family. In terms of assembly, part of the 30S ribosomal subunit. Interacts with proteins S7 and S18. Binds to IF-3.

Functionally, located on the platform of the 30S subunit, it bridges several disparate RNA helices of the 16S rRNA. Forms part of the Shine-Dalgarno cleft in the 70S ribosome. The protein is Small ribosomal subunit protein uS11 of Alkaliphilus metalliredigens (strain QYMF).